Consider the following 105-residue polypeptide: Nitrogen fixation nifHD region GlnB-like protein 1 (105 aa).

The protein belongs to the P(II) protein family.

Its function is as follows. Could be involved in the regulation of nitrogen fixation. This is Nitrogen fixation nifHD region GlnB-like protein 1 (glnBA) from Methanothermococcus thermolithotrophicus (Methanococcus thermolithotrophicus).